Reading from the N-terminus, the 256-residue chain is Imidazole glycerol phosphate synthase subunit HisF (256 aa).

Residues Asp13 and Asp132 contribute to the active site.

Belongs to the HisA/HisF family. Heterodimer of HisH and HisF.

It is found in the cytoplasm. It catalyses the reaction 5-[(5-phospho-1-deoxy-D-ribulos-1-ylimino)methylamino]-1-(5-phospho-beta-D-ribosyl)imidazole-4-carboxamide + L-glutamine = D-erythro-1-(imidazol-4-yl)glycerol 3-phosphate + 5-amino-1-(5-phospho-beta-D-ribosyl)imidazole-4-carboxamide + L-glutamate + H(+). Its pathway is amino-acid biosynthesis; L-histidine biosynthesis; L-histidine from 5-phospho-alpha-D-ribose 1-diphosphate: step 5/9. Its function is as follows. IGPS catalyzes the conversion of PRFAR and glutamine to IGP, AICAR and glutamate. The HisF subunit catalyzes the cyclization activity that produces IGP and AICAR from PRFAR using the ammonia provided by the HisH subunit. In Leptospira interrogans serogroup Icterohaemorrhagiae serovar copenhageni (strain Fiocruz L1-130), this protein is Imidazole glycerol phosphate synthase subunit HisF.